Reading from the N-terminus, the 64-residue chain is Large ribosomal subunit protein bL35 (64 aa).

A compositionally biased stretch (basic residues) spans 1–14 (MKNKTHKGTAKRVK). The segment at 1 to 30 (MKNKTHKGTAKRVKVTGSGKLVREQANRRH) is disordered. A compositionally biased stretch (basic and acidic residues) spans 21–30 (LVREQANRRH).

The protein belongs to the bacterial ribosomal protein bL35 family.

The sequence is that of Large ribosomal subunit protein bL35 from Corynebacterium efficiens (strain DSM 44549 / YS-314 / AJ 12310 / JCM 11189 / NBRC 100395).